The sequence spans 229 residues: UPF0758 protein Cagg_0777 (229 aa).

In terms of domain architecture, MPN spans 105–227; that stretch reads PIRSPGDVAA…YVSLRERGIG (123 aa). Residues His-176, His-178, and Asp-189 each contribute to the Zn(2+) site. Residues 176–189 carry the JAMM motif motif; sequence HNHPSGEATPSPED.

Belongs to the UPF0758 family.

The sequence is that of UPF0758 protein Cagg_0777 from Chloroflexus aggregans (strain MD-66 / DSM 9485).